Reading from the N-terminus, the 273-residue chain is Cell division protein ZipA (273 aa).

A topological domain (periplasmic) is located at residue methionine 1. A helical transmembrane segment spans residues 2–22 (DIGLREWLIVIGIIVIAGILF). At 23–273 (DGWRRMRGGK…ERRQMTIKQR (251 aa)) the chain is on the cytoplasmic side. Positions 61–127 (VVNREHEPSL…DLQERPQKEQ (67 aa)) are disordered.

This sequence belongs to the ZipA family. Interacts with FtsZ via their C-terminal domains.

The protein localises to the cell inner membrane. Its function is as follows. Essential cell division protein that stabilizes the FtsZ protofilaments by cross-linking them and that serves as a cytoplasmic membrane anchor for the Z ring. Also required for the recruitment to the septal ring of downstream cell division proteins. The protein is Cell division protein ZipA of Stutzerimonas stutzeri (strain A1501) (Pseudomonas stutzeri).